The sequence spans 237 residues: 1-(5-phosphoribosyl)-5-[(5-phosphoribosylamino)methylideneamino] imidazole-4-carboxamide isomerase (237 aa).

D8 functions as the Proton acceptor in the catalytic mechanism. D129 (proton donor) is an active-site residue.

This sequence belongs to the HisA/HisF family.

It localises to the cytoplasm. It catalyses the reaction 1-(5-phospho-beta-D-ribosyl)-5-[(5-phospho-beta-D-ribosylamino)methylideneamino]imidazole-4-carboxamide = 5-[(5-phospho-1-deoxy-D-ribulos-1-ylimino)methylamino]-1-(5-phospho-beta-D-ribosyl)imidazole-4-carboxamide. It participates in amino-acid biosynthesis; L-histidine biosynthesis; L-histidine from 5-phospho-alpha-D-ribose 1-diphosphate: step 4/9. This Clostridium botulinum (strain Alaska E43 / Type E3) protein is 1-(5-phosphoribosyl)-5-[(5-phosphoribosylamino)methylideneamino] imidazole-4-carboxamide isomerase.